The sequence spans 317 residues: Probable cell division protein WhiA (317 aa).

Positions 267 to 300 form a DNA-binding region, H-T-H motif; it reads SLKELGEMLHPPVGKSGVNHRLRRLELIARQVRG.

Belongs to the WhiA family.

Functionally, involved in cell division and chromosome segregation. The protein is Probable cell division protein WhiA of Moorella thermoacetica (strain ATCC 39073 / JCM 9320).